The primary structure comprises 101 residues: Large ribosomal subunit protein bL28 (101 aa).

The protein belongs to the bacterial ribosomal protein bL28 family.

This Rhodopseudomonas palustris (strain BisB18) protein is Large ribosomal subunit protein bL28.